The chain runs to 367 residues: Protein RecA (367 aa).

73–80 (GPESSGKT) contacts ATP. Residues 345-367 (DEPVAKKASAKESKEAKELKEVE) form a disordered region.

It belongs to the RecA family.

The protein localises to the cytoplasm. Functionally, can catalyze the hydrolysis of ATP in the presence of single-stranded DNA, the ATP-dependent uptake of single-stranded DNA by duplex DNA, and the ATP-dependent hybridization of homologous single-stranded DNAs. It interacts with LexA causing its activation and leading to its autocatalytic cleavage. The polypeptide is Protein RecA (Janthinobacterium sp. (strain Marseille) (Minibacterium massiliensis)).